The primary structure comprises 212 residues: Probable GTP-binding protein EngB (212 aa).

Residues alanine 38–leucine 210 form the EngB-type G domain. Residues glycine 46–serine 53, glycine 73–glutamine 77, aspartate 91–glycine 94, threonine 158–aspartate 161, and valine 189–serine 191 contribute to the GTP site. Serine 53 and threonine 75 together coordinate Mg(2+).

The protein belongs to the TRAFAC class TrmE-Era-EngA-EngB-Septin-like GTPase superfamily. EngB GTPase family. Mg(2+) serves as cofactor.

Functionally, necessary for normal cell division and for the maintenance of normal septation. The polypeptide is Probable GTP-binding protein EngB (Rickettsia bellii (strain OSU 85-389)).